Reading from the N-terminus, the 310-residue chain is Carbamate kinase (310 aa).

This sequence belongs to the carbamate kinase family. As to quaternary structure, homodimer.

It localises to the cytoplasm. The enzyme catalyses hydrogencarbonate + NH4(+) + ATP = carbamoyl phosphate + ADP + H2O + H(+). It functions in the pathway amino-acid degradation; L-arginine degradation via ADI pathway. The chain is Carbamate kinase from Haemophilus influenzae (strain ATCC 51907 / DSM 11121 / KW20 / Rd).